The following is a 512-amino-acid chain: Cytochrome P450 26B1 (512 aa).

Heme is bound at residue cysteine 441.

The protein belongs to the cytochrome P450 family. The cofactor is heme. In terms of tissue distribution, highly expressed in brain, particularly in the cerebellum and pons.

The protein localises to the endoplasmic reticulum membrane. It is found in the microsome membrane. The enzyme catalyses all-trans-retinoate + reduced [NADPH--hemoprotein reductase] + O2 = all-trans-4-hydroxyretinoate + oxidized [NADPH--hemoprotein reductase] + H2O + H(+). The catalysed reaction is all-trans-retinoate + reduced [NADPH--hemoprotein reductase] + O2 = all-trans-18-hydroxyretinoate + oxidized [NADPH--hemoprotein reductase] + H2O + H(+). Functionally, a cytochrome P450 monooxygenase involved in the metabolism of retinoates (RAs), the active metabolites of vitamin A, and critical signaling molecules in animals. RAs exist as at least four different isomers: all-trans-RA (atRA), 9-cis-RA, 13-cis-RA, and 9,13-dicis-RA, where atRA is considered to be the biologically active isomer, although 9-cis-RA and 13-cis-RA also have activity. Catalyzes the hydroxylation of atRA primarily at C-4 and C-18, thereby contributing to the regulation of atRA homeostasis and signaling. Hydroxylation of atRA limits its biological activity and initiates a degradative process leading to its eventual elimination. Involved in the convertion of atRA to all-trans-4-oxo-RA. Can oxidize all-trans-13,14-dihydroretinoate (DRA) to metabolites which could include all-trans-4-oxo-DRA, all-trans-4-hydroxy-DRA, all-trans-5,8-epoxy-DRA, and all-trans-18-hydroxy-DRA. Shows preference for the following substrates: atRA &gt; 9-cis-RA &gt; 13-cis-RA. Plays a central role in germ cell development: acts by degrading RAs in the developing testis, preventing STRA8 expression, thereby leading to delay of meiosis. Required for the maintenance of the undifferentiated state of male germ cells during embryonic development in Sertoli cells, inducing arrest in G0 phase of the cell cycle and preventing meiotic entry. Plays a role in skeletal development, both at the level of patterning and in the ossification of bone and the establishment of some synovial joints. Essential for postnatal survival. Also has a significant activity in oxidation of tazarotenic acid and may therefore metabolize that xenobiotic in vivo. This Homo sapiens (Human) protein is Cytochrome P450 26B1 (CYP26B1).